Consider the following 334-residue polypeptide: Malate dehydrogenase, cytoplasmic (334 aa).

At serine 2 the chain carries N-acetylserine. NAD(+) contacts are provided by residues 11–17 (GAAGQIA) and aspartate 42. Substrate is bound by residues arginine 92 and arginine 98. Asparagine 105 is a binding site for NAD(+). Lysine 110 carries the N6-succinyllysine modification. Glutamine 112 serves as a coordination point for NAD(+). Lysine 118 and lysine 121 each carry N6-acetyllysine. 129–131 (VGN) provides a ligand contact to NAD(+). Asparagine 131 and arginine 162 together coordinate substrate. Histidine 187 functions as the Proton acceptor in the catalytic mechanism. Residue lysine 214 is modified to N6-succinyllysine. Position 217 is a phosphoserine (serine 217). An Omega-N-methylarginine modification is found at arginine 230. Phosphoserine is present on serine 241. At lysine 298 the chain carries N6-acetyllysine; alternate. Lysine 298 is modified (N6-succinyllysine; alternate). Position 309 is a phosphoserine (serine 309). Lysine 318 is subject to N6-succinyllysine. Serine 332 and serine 333 each carry phosphoserine.

It belongs to the LDH/MDH superfamily. MDH type 2 family. Homodimer. In terms of processing, ISGylated. Acetylation at Lys-118 dramatically enhances enzymatic activity and promotes adipogenic differentiation.

The protein localises to the cytoplasm. Its subcellular location is the cytosol. The catalysed reaction is (S)-malate + NAD(+) = oxaloacetate + NADH + H(+). It catalyses the reaction (2R)-2-hydroxy-3-(4-hydroxyphenyl)propanoate + NAD(+) = 3-(4-hydroxyphenyl)pyruvate + NADH + H(+). The enzyme catalyses (S)-2-hydroxyglutarate + NAD(+) = 2-oxoglutarate + NADH + H(+). Its function is as follows. Catalyzes the reduction of aromatic alpha-keto acids in the presence of NADH. Plays essential roles in the malate-aspartate shuttle and the tricarboxylic acid cycle, important in mitochondrial NADH supply for oxidative phosphorylation. Catalyzes the reduction of 2-oxoglutarate to 2-hydroxyglutarate, leading to elevated reactive oxygen species (ROS). The polypeptide is Malate dehydrogenase, cytoplasmic (Mdh1) (Rattus norvegicus (Rat)).